The chain runs to 206 residues: Large ribosomal subunit protein uL4 (206 aa).

Residues 47 to 77 are disordered; it reads TRAQKGRSDVTGSTRKQWRQKGTGRARTGAA.

It belongs to the universal ribosomal protein uL4 family. As to quaternary structure, part of the 50S ribosomal subunit.

One of the primary rRNA binding proteins, this protein initially binds near the 5'-end of the 23S rRNA. It is important during the early stages of 50S assembly. It makes multiple contacts with different domains of the 23S rRNA in the assembled 50S subunit and ribosome. Its function is as follows. Forms part of the polypeptide exit tunnel. The protein is Large ribosomal subunit protein uL4 of Nitrosomonas europaea (strain ATCC 19718 / CIP 103999 / KCTC 2705 / NBRC 14298).